Reading from the N-terminus, the 97-residue chain is Small ribosomal subunit protein bS6 (97 aa).

This sequence belongs to the bacterial ribosomal protein bS6 family.

Functionally, binds together with bS18 to 16S ribosomal RNA. In Lactococcus lactis subsp. lactis (strain IL1403) (Streptococcus lactis), this protein is Small ribosomal subunit protein bS6 (rpsF).